Consider the following 1669-residue polypeptide: Collagen alpha-3(IV) chain (1669 aa).

Positions 1-28 (MHSKTAPRFLVFLLLTLLLLLAASPVAS) are cleaved as a signal peptide. A 7S domain region spans residues 29-42 (KGCVCKGKGQCLCA). The tract at residues 43–1436 (GTKGEKGEKG…KGNPGDRGTP (1394 aa)) is triple-helical region. 2 disordered regions span residues 44–473 (TKGE…EPGS) and 500–1439 (PGGR…PATG). The span at 54-68 (PGSPGFPGQKGFPGP) shows a compositional bias: low complexity. Residues 105–114 (PGLPGLPGHP) show a composition bias toward pro residues. An N-linked (GlcNAc...) asparagine glycan is attached at Asn126. Residues 188–200 (PGFPGPAGPPGPP) show a composition bias toward pro residues. A compositionally biased stretch (low complexity) spans 202 to 211 (FFGLPGAMGP). The N-linked (GlcNAc...) asparagine glycan is linked to Asn253. A compositionally biased stretch (basic and acidic residues) spans 255–269 (SDFKGEKGDEGERGE). Low complexity-rich tracts occupy residues 279–290 (PGDSYGSEKGAP) and 382–393 (SPGLSRPGLRGP). Residues 416–437 (PPGPLGCPGSPGPPGPPGPPGC) show a composition bias toward pro residues. Residues 551 to 560 (NPGDPGLRGL) are compositionally biased toward low complexity. Pro residues-rich tracts occupy residues 596–617 (PPGP…PPGY) and 654–665 (LGPPGPPGPPGQ). The segment covering 666 to 684 (AGPRGLPGLPGPVGKCDPG) has biased composition (low complexity). Residues 778–787 (GTPGRGGLDG) show a composition bias toward gly residues. A Cell attachment site motif is present at residues 830–832 (RGD). Positions 861–876 (CPGEMGPPGQKGYPGA) are enriched in low complexity. Positions 922–939 (KGEKGRPGAKGERGEKGK) are enriched in basic and acidic residues. The span at 970–985 (RGNPGLPGPKGLEGLP) shows a compositional bias: low complexity. The short motif at 994–996 (RGD) is the Cell attachment site element. The segment covering 1092 to 1103 (SGPAGPDGAPGS) has biased composition (low complexity). The span at 1128 to 1146 (PGPPGSTGPPGPPGLPGLP) shows a compositional bias: pro residues. Positions 1152-1154 (RGD) match the Cell attachment site motif. Over residues 1228 to 1248 (PGAIIPGPKGDRGLPGLRGNP) the composition is skewed to low complexity. Residues 1250 to 1259 (EPGPPGPPGP) show a composition bias toward pro residues. Positions 1304–1306 (RGD) match the Cell attachment site motif. Positions 1333–1343 (PVGPKGPPGPR) are enriched in pro residues. 2 stretches are compositionally biased toward low complexity: residues 1366 to 1379 (QPGM…LGLP) and 1402 to 1429 (PAGT…LKGN). An epitope recognized by Goodpasture antibodies region spans residues 1425–1443 (GLKGNPGDRGTPATGTRMR). One can recognise a Collagen IV NC1 domain in the interval 1444–1668 (GFIFTRHSQT…SRCQVCMKKR (225 aa)). Intrachain disulfides connect Cys1459/Cys1550, Cys1492/Cys1547, Cys1504/Cys1510, Cys1569/Cys1664, Cys1603/Cys1661, and Cys1615/Cys1621. Positions 1478-1556 (NKRAHGQDLG…CTVCEGPAMA (79 aa)) are required for the anti-angiogenic activity of tumstatin. Residue Met1532 forms an S-Lysyl-methionine sulfilimine (Met-Lys) (interchain with K-1650) linkage. Positions 1609-1627 (ASPFIECHGRGTCNYYSNS) are required for the anti-tumor cell activity of tumstatin. Lys1650 participates in a covalent cross-link: S-Lysyl-methionine sulfilimine (Lys-Met) (interchain with M-1532).

Belongs to the type IV collagen family. As to quaternary structure, there are six type IV collagen isoforms, alpha 1(IV)-alpha 6(IV), each of which can form a triple helix structure with 2 other chains to generate type IV collagen network. The alpha 3(IV) chain forms a triple helical protomer with alpha 4(IV) and alpha 5(IV); this triple helical structure dimerizes through NC1-NC1 domain interactions such that the alpha 3(IV), alpha 4(IV) and alpha 5(IV) chains of one protomer connect with the alpha 5(IV), alpha 4(IV) and alpha 3(IV) chains of the opposite promoter, respectively. Interacts with ITGB3. Associates with LAMB2 at the neuromuscular junction and in GBM. Prolines at the third position of the tripeptide repeating unit (G-X-Y) are hydroxylated in some or all of the chains. In terms of processing, type IV collagens contain numerous cysteine residues which are involved in inter- and intramolecular disulfide bonding. 12 of these, located in the NC1 domain, are conserved in all known type IV collagens. Post-translationally, the trimeric structure of the NC1 domains is stabilized by covalent bonds between Lys and Met residues. Phosphorylated. Thought to be phosphorylated by CERT, but CERT does not have kinase activity. As to expression, highly expressed in kidney and lung. Detected at lower levels in heart, muscle and skin.

It is found in the secreted. Its subcellular location is the extracellular space. It localises to the extracellular matrix. The protein resides in the basement membrane. Functionally, type IV collagen is the major structural component of glomerular basement membranes (GBM), forming a 'chicken-wire' meshwork together with laminins, proteoglycans and entactin/nidogen. Tumstatin, a cleavage fragment corresponding to the collagen alpha 3(IV) NC1 domain, possesses both anti-angiogenic and anti-tumor cell activity; these two anti-tumor properties may be regulated via RGD-independent ITGB3-mediated mechanisms. This Mus musculus (Mouse) protein is Collagen alpha-3(IV) chain.